The sequence spans 404 residues: Formate-dependent phosphoribosylglycinamide formyltransferase (404 aa).

Residues Glu25 to Leu26 and Glu85 each bind N(1)-(5-phospho-beta-D-ribosyl)glycinamide. ATP-binding positions include Arg118, Lys159, Ser164 to Gln169, Glu199 to Ile202, and Glu207. The region spanning Arg123–Leu318 is the ATP-grasp domain. Mg(2+)-binding residues include Glu277 and Glu289. N(1)-(5-phospho-beta-D-ribosyl)glycinamide contacts are provided by residues Asp296, Lys365, and Arg372–Arg373.

Belongs to the PurK/PurT family. As to quaternary structure, homodimer.

It carries out the reaction N(1)-(5-phospho-beta-D-ribosyl)glycinamide + formate + ATP = N(2)-formyl-N(1)-(5-phospho-beta-D-ribosyl)glycinamide + ADP + phosphate + H(+). It functions in the pathway purine metabolism; IMP biosynthesis via de novo pathway; N(2)-formyl-N(1)-(5-phospho-D-ribosyl)glycinamide from N(1)-(5-phospho-D-ribosyl)glycinamide (formate route): step 1/1. Involved in the de novo purine biosynthesis. Catalyzes the transfer of formate to 5-phospho-ribosyl-glycinamide (GAR), producing 5-phospho-ribosyl-N-formylglycinamide (FGAR). Formate is provided by PurU via hydrolysis of 10-formyl-tetrahydrofolate. This Burkholderia pseudomallei (strain 668) protein is Formate-dependent phosphoribosylglycinamide formyltransferase.